The primary structure comprises 142 residues: Matrix protein (142 aa).

GMP contacts are provided by residues 64–66 (DVE) and Ala-117.

Homooligomer. Homotetramer. Interacts with phosphoprotein P. Binds to ssRNA. In terms of processing, not glycosylated.

It is found in the virion. The protein localises to the host cytoplasm. Its subcellular location is the host cell membrane. In terms of biological role, plays a crucial role in virion assembly and budding. The chain is Matrix protein (M) from Bos taurus (Bovine).